The chain runs to 406 residues: Bifunctional enzyme IspD/IspF (406 aa).

A 2-C-methyl-D-erythritol 4-phosphate cytidylyltransferase region spans residues 1–246; the sequence is MTQMHSTQPM…KLSAGLLPDV (246 aa). Residues 247-406 are 2-C-methyl-D-erythritol 2,4-cyclodiphosphate synthase; it reads RTGNGYDVHQ…ATVVYRGGRP (160 aa). A divalent metal cation contacts are provided by Asp253 and His255. Residues 253 to 255 and 279 to 280 each bind 4-CDP-2-C-methyl-D-erythritol 2-phosphate; these read DVH and HS. Residue His287 participates in a divalent metal cation binding. Residues 301 to 303, 377 to 380, Phe384, and Arg387 each bind 4-CDP-2-C-methyl-D-erythritol 2-phosphate; these read DIG and TTNE.

In the N-terminal section; belongs to the IspD/TarI cytidylyltransferase family. IspD subfamily. It in the C-terminal section; belongs to the IspF family. It depends on a divalent metal cation as a cofactor.

The catalysed reaction is 2-C-methyl-D-erythritol 4-phosphate + CTP + H(+) = 4-CDP-2-C-methyl-D-erythritol + diphosphate. It carries out the reaction 4-CDP-2-C-methyl-D-erythritol 2-phosphate = 2-C-methyl-D-erythritol 2,4-cyclic diphosphate + CMP. The protein operates within isoprenoid biosynthesis; isopentenyl diphosphate biosynthesis via DXP pathway; isopentenyl diphosphate from 1-deoxy-D-xylulose 5-phosphate: step 2/6. It participates in isoprenoid biosynthesis; isopentenyl diphosphate biosynthesis via DXP pathway; isopentenyl diphosphate from 1-deoxy-D-xylulose 5-phosphate: step 4/6. In terms of biological role, bifunctional enzyme that catalyzes the formation of 4-diphosphocytidyl-2-C-methyl-D-erythritol from CTP and 2-C-methyl-D-erythritol 4-phosphate (MEP) (IspD), and catalyzes the conversion of 4-diphosphocytidyl-2-C-methyl-D-erythritol 2-phosphate (CDP-ME2P) to 2-C-methyl-D-erythritol 2,4-cyclodiphosphate (ME-CPP) with a corresponding release of cytidine 5-monophosphate (CMP) (IspF). The protein is Bifunctional enzyme IspD/IspF of Rhizobium rhizogenes (strain K84 / ATCC BAA-868) (Agrobacterium radiobacter).